The chain runs to 120 residues: Non-specific lipid-transfer protein 2 (120 aa).

The signal sequence occupies residues 1 to 25; sequence MATSMKLACVALVMCMVVIAPMAEA. 4 cysteine pairs are disulfide-bonded: Cys29/Cys78, Cys39/Cys55, Cys56/Cys101, and Cys76/Cys115.

It belongs to the plant LTP family. Expressed in roots, stem, leaves and tendrils of the mature plant.

Functionally, plant non-specific lipid-transfer proteins transfer phospholipids as well as galactolipids across membranes. May play a role in wax or cutin deposition in the cell walls of expanding epidermal cells and certain secretory tissues. This is Non-specific lipid-transfer protein 2 from Pisum sativum (Garden pea).